We begin with the raw amino-acid sequence, 160 residues long: Nucleotide-binding protein VV1_2655 (160 aa).

The protein belongs to the YajQ family.

Its function is as follows. Nucleotide-binding protein. The sequence is that of Nucleotide-binding protein VV1_2655 from Vibrio vulnificus (strain CMCP6).